The chain runs to 747 residues: Probable cyclic nucleotide-gated ion channel 6 (747 aa).

The Cytoplasmic portion of the chain corresponds to 1–117; the sequence is MFDTCGPKGV…DKFLLLCNKL (117 aa). Residues 118 to 138 traverse the membrane as a helical segment; it reads FVASCILAVSVDPLFLYLPFI. Residues 139-150 lie on the Extracellular side of the membrane; the sequence is NDKAKCVGIDRK. A helical transmembrane segment spans residues 151–171; the sequence is LAIIVTTIRTVIDSFYLFHMA. Over 172–205 the chain is Cytoplasmic; sequence LRFRTAYVAPSSRVFGRGELVIDPAQIAKRYLQQ. The helical transmembrane segment at 206–226 threads the bilayer; the sequence is YFIIDLLSVLPVPQIIVWRFL. The Extracellular portion of the chain corresponds to 227 to 239; that stretch reads YTSRGANVLATKQ. A helical membrane pass occupies residues 240 to 260; sequence ALRYIVLVQYIPRFLRMYPLS. Residues 261–280 are Cytoplasmic-facing; that stretch reads SELKRTAGVFAETAWAGAAY. The helical transmembrane segment at 281 to 301 threads the bilayer; sequence YLLLYMLASHIVGALWYLLAL. Over 302 to 407 the chain is Extracellular; it reads ERNNDCWSKA…GQGLETSTYP (106 aa). The helical transmembrane segment at 408 to 428 threads the bilayer; it reads GEVIFSITLAIAGLLLFALLI. Topologically, residues 429-747 are cytoplasmic; it reads GNMQTYLQSL…PEPDFSAEDH (319 aa). A nucleoside 3',5'-cyclic phosphate-binding positions include 514-638 and aspartate 585; that span reads LFEN…SRQV. The interval 630–645 is calmodulin-binding; sequence FRRLHSRQVQHTFRFY. An IQ domain is found at 650 to 679; sequence RTWAACFMQAAWRRYIKRKKLEQLRKEEEE.

Belongs to the cyclic nucleotide-gated cation channel (TC 1.A.1.5) family. In terms of assembly, homotetramer or heterotetramer.

The protein resides in the cell membrane. In terms of biological role, probable cyclic nucleotide-gated ion channel. This is Probable cyclic nucleotide-gated ion channel 6 (CNGC6) from Arabidopsis thaliana (Mouse-ear cress).